The primary structure comprises 438 residues: Thymidine phosphorylase (438 aa).

This sequence belongs to the thymidine/pyrimidine-nucleoside phosphorylase family. Homodimer.

The catalysed reaction is thymidine + phosphate = 2-deoxy-alpha-D-ribose 1-phosphate + thymine. Its pathway is pyrimidine metabolism; dTMP biosynthesis via salvage pathway; dTMP from thymine: step 1/2. The enzymes which catalyze the reversible phosphorolysis of pyrimidine nucleosides are involved in the degradation of these compounds and in their utilization as carbon and energy sources, or in the rescue of pyrimidine bases for nucleotide synthesis. In Burkholderia orbicola (strain AU 1054), this protein is Thymidine phosphorylase.